We begin with the raw amino-acid sequence, 69 residues long: U2-agatoxin-Ao1g (69 aa).

Positions 1–20 (MKAIISLLLISAMVFSMIEA) are cleaved as a signal peptide. Positions 21–34 (VPVEEGLQLFEGER) are excised as a propeptide. 3 cysteine pairs are disulfide-bonded: cysteine 36–cysteine 52, cysteine 43–cysteine 57, and cysteine 51–cysteine 67. The residue at position 68 (leucine 68) is a Leucine amide.

Belongs to the neurotoxin 01 (U2-agtx) family. As to expression, expressed by the venom gland.

The protein resides in the secreted. Functionally, insect active toxin causing rapid but reversible paralysis in crickets. No activity shown in mammals. Does not show effect on mammalian voltage-gated calcium channels. The polypeptide is U2-agatoxin-Ao1g (Agelena orientalis (Funnel-web spider)).